A 1514-amino-acid chain; its full sequence is MDFIEISLIFREHLPLLELCSVIINLLLFLVFLFAVSARQILVCVRRGRDRLSKDDTVSASNLSLEREVNHVSVGFGFNLSLLCCLYVLGVQVLVLVYDGVKVRREVSDWFVLCFPASQSLAWFVLSFLVLHLKYKSSEKLPFLVRIWWFLAFSICLCTMYVDGRRLAIEGWSRCSSHVVANLAVTPALGFLCFLAWRGVSGIQVTRSSSDLQEPLLVEEEAACLKVTPYSTAGLVSLITLSWLDPLLSAGSKRPLELKDIPLLAPRDRAKSSYKVLKSNWKRCKSENPSKPPSLARAIMKSFWKEAACNAVFAGLNTLVSYVGPYLISYFVDYLGGKEIFPHEGYVLAGIFFTSKLIETVTTRQWYMGVDILGMHVRSALTAMVYRKGLKLSSIAKQNHTSGEIVNYMAVDVQRIGDYSWYLHDIWMLPMQIVLALAILYKSVGIAAVATLVATIISILVTIPLAKVQEDYQDKLMTAKDERMRKTSECLRNMRVLKLQAWEDRYRVRLEEMREEEYGWLRKALYSQAFVTFIFWSSPIFVAAVTFATSIFLGTQLTAGGVLSALATFRILQEPLRNFPDLVSMMAQTKVSLDRISGFLQEEELQEDATVVIPRGLSNIAIEIKDGVFCWDPFSSRPTLSGIQMKVEKGMRVAVCGTVGSGKSSFISCILGEIPKISGEVRICGTTGYVSQSAWIQSGNIEENILFGSPMEKTKYKNVIQACSLKKDIELFSHGDQTIIGERGINLSGGQKQRVQLARALYQDADIYLLDDPFSALDAHTGSDLFRDYILSALAEKTVVFVTHQVEFLPAADLILVLKEGRIIQSGKYDDLLQAGTDFKALVSAHHEAIEAMDIPSPSSEDSDENPIRDSLVLHNPKSDVFENDIETLAKEVQEGGSASDLKAIKEKKKKAKRSRKKQLVQEEERVKGKVSMKVYLSYMGAAYKGALIPLIILAQAAFQFLQIASNWWMAWANPQTEGDESKVDPTLLLIVYTALAFGSSVFIFVRAALVATFGLAAAQKLFLNMLRSVFRAPMSFFDSTPAGRILNRVSIDQSVVDLDIPFRLGGFASTTIQLCGIVAVMTNVTWQVFLLVVPVAVACFWMQKYYMASSRELVRIVSIQKSPIIHLFGESIAGAATIRGFGQEKRFIKRNLYLLDCFVRPFFCSIAAIEWLCLRMELLSTLVFAFCMVLLVSFPHGTIDPSMAGLAVTYGLNLNGRLSRWILSFCKLENKIISIERIYQYSQIVGEAPAIIEDFRPPSSWPATGTIELVDVKVRYAENLPTVLHGVSCVFPGGKKIGIVGRTGSGKSTLIQALFRLIEPTAGKITIDNIDISQIGLHDLRSRLGIIPQDPTLFEGTIRANLDPLEEHSDDKIWEALDKSQLGDVVRGKDLKLDSPVLENGDNWSVGQRQLVSLGRALLKQAKILVLDEATASVDTATDNLIQKIIRTEFEDCTVCTIAHRIPTVIDSDLVLVLSDGRVAEFDTPARLLEDKSSMFLKLVTEYSSRSTGIPEL.

10 helical membrane passes run L16–V36, F76–L96, F111–L131, P142–V162, S177–W197, V312–V332, Y334–T354, W421–Y441, I446–A466, and F533–L553. An ABC transmembrane type-1 1 domain is found at A307–Q588. The 224-residue stretch at I622–A845 folds into the ABC transporter 1 domain. Residue G657–S664 coordinates ATP. Positions A899–V927 form a coiled coil. 6 consecutive transmembrane segments (helical) span residues G946–S966, P986–V1006, I1078–V1098, I1117–A1137, L1155–L1175, and L1180–I1200. The ABC transmembrane type-1 2 domain maps to I949–N1231. In terms of domain architecture, ABC transporter 2 spans I1268 to T1502. G1302–S1309 contacts ATP.

It belongs to the ABC transporter superfamily. ABCC family. Conjugate transporter (TC 3.A.1.208) subfamily. In terms of tissue distribution, ubiquitous, mostly in vascular tissues and epidermis, including guard cells.

It localises to the membrane. It carries out the reaction ATP + H2O + xenobioticSide 1 = ADP + phosphate + xenobioticSide 2.. (E(2)17G) transport activity in negatively regulated by organic anions such as oestradiol-3-sulfate, luteolin-7-O-diglucuronide-4'-O-glucuronide, glycocholate, vanadate and the sulfonylurea glibenclamide, and, to a lower extent, by bafilomycin A1, NH(4)Cl, GSH, GSSG and DNB-GS. Pump for glutathione S-conjugates. Involved in regulation of K(+) and Na(+) cell content. Mediates resistance to NaCl and Li(+), confers sensitivity to sulfonylurea drugs such as glibenclamide (inducer of stomatal opening), and required for stomatal opening regulation by auxin, abscisic acid (ABA) and external Ca(2+). Transports oestradiol-17-(beta-D-glucuronide) (E(2)17G). Involved in the root auxin content regulation that controls the transition from primary root elongation to lateral root formation. Plays a role in ABA-mediated germination inhibition. High-affinity inositol hexakisphosphate transporter that plays a role in guard cell signaling and phytic acid storage. Required for phytic acid accumulation in developing seeds. Phytic acid is the primary storage form of phosphorus in cereal grains and other plant seeds. This Arabidopsis thaliana (Mouse-ear cress) protein is ABC transporter C family member 5 (ABCC5).